A 111-amino-acid chain; its full sequence is Probable 4-amino-4-deoxy-L-arabinose-phosphoundecaprenol flippase subunit ArnE (111 aa).

Transmembrane regions (helical) follow at residues 37–57 (LIWL…WLKL), 65–85 (QAYP…HFFF), and 91–111 (LQHW…GQGI).

Belongs to the ArnE family. Heterodimer of ArnE and ArnF.

The protein resides in the cell inner membrane. It participates in bacterial outer membrane biogenesis; lipopolysaccharide biosynthesis. Functionally, translocates 4-amino-4-deoxy-L-arabinose-phosphoundecaprenol (alpha-L-Ara4N-phosphoundecaprenol) from the cytoplasmic to the periplasmic side of the inner membrane. This chain is Probable 4-amino-4-deoxy-L-arabinose-phosphoundecaprenol flippase subunit ArnE, found in Hamiltonella defensa subsp. Acyrthosiphon pisum (strain 5AT).